Reading from the N-terminus, the 210-residue chain is MTNLNYQQTHFVMSAPDIRHLPSDCGIEVAFAGRSNAGKSSALNTLTNQKSLARTSKTPGRTQLINLFEVVEGKRLVDLPGYGYAEVPEEMKRKWQRALGEYLEKRQSLQGLVVLMDIRHPLKDLDQQMIQWAVESNIQVLVLLTKADKLASGARKAQLNMVREAVLAFNGDVQVEAFSSLKKQGVDKLRQKLDSWFSELAPVEEIQDGE.

The EngB-type G domain occupies 25–199; it reads CGIEVAFAGR…RQKLDSWFSE (175 aa). GTP-binding positions include 33–40, 60–64, 78–81, 145–148, and 178–180; these read GRSNAGKS, GRTQL, DLPG, TKAD, and FSS. Mg(2+) is bound by residues S40 and T62.

The protein belongs to the TRAFAC class TrmE-Era-EngA-EngB-Septin-like GTPase superfamily. EngB GTPase family. It depends on Mg(2+) as a cofactor.

Its function is as follows. Necessary for normal cell division and for the maintenance of normal septation. The protein is Probable GTP-binding protein EngB of Salmonella dublin (strain CT_02021853).